The primary structure comprises 396 residues: Pectinesterase (396 aa).

The first 21 residues, 1 to 21 (MQSKTLYLKATALLGGCTVFA), serve as a signal peptide directing secretion. Threonine 174 lines the substrate pocket. The Proton donor role is filled by aspartate 232. The Nucleophile role is filled by aspartate 259. Positions 324 and 326 each coordinate substrate.

This sequence belongs to the pectinesterase family.

Its subcellular location is the secreted. The enzyme catalyses [(1-&gt;4)-alpha-D-galacturonosyl methyl ester](n) + n H2O = [(1-&gt;4)-alpha-D-galacturonosyl](n) + n methanol + n H(+). It functions in the pathway glycan metabolism; pectin degradation; 2-dehydro-3-deoxy-D-gluconate from pectin: step 1/5. Involved in maceration and soft-rotting of plant tissue. This chain is Pectinesterase (pme), found in Ralstonia nicotianae (strain ATCC BAA-1114 / GMI1000) (Ralstonia solanacearum).